The primary structure comprises 334 residues: Serine/Arginine-related protein 53 (334 aa).

Over residues 1–13 (MGRRSSDTEEESR) the composition is skewed to basic and acidic residues. Disordered stretches follow at residues 1 to 173 (MGRR…IKAG), 201 to 222 (LKAKERNEEEAKRRKEEDQATL), and 241 to 290 (VQQT…SIPT). Positions 14–24 (SKRKKKHRRRS) are enriched in basic residues. A compositionally biased stretch (basic and acidic residues) spans 44 to 62 (PRSESRSWSRDRQPRSHSY). The span at 78–118 (SRRKRSRSRSRGRGKSYRVQRSRSKSRTRRSRSRPRPRSHS) shows a compositional bias: basic residues. Composition is skewed to basic and acidic residues over residues 132-166 (RSRDRDRRKVRDKEKREKEKDKGKDKEAHTIKRGD), 201-218 (LKAKERNEEEAKRRKEED), and 247-262 (SSKDVKKSVEPSEVKH). A coiled-coil region spans residues 180-234 (AEQAKARLQLVLEAAAKADEALKAKERNEEEAKRRKEEDQATLGEQVKRVKEIEA).

In terms of assembly, interacts (via Arg/Ser-rich domain) with LUC7L3, RBM39 and RSF1. In terms of processing, phosphorylated.

The protein resides in the nucleus speckle. The protein localises to the nucleus. Its subcellular location is the cytoplasm. In terms of biological role, plays a role in pre-mRNA splicing. Involved in both constitutive and alternative pre-mRNA splicing. May have a role in the recognition of the 3' splice site during the second step of splicing. The sequence is that of Serine/Arginine-related protein 53 (Rsrc1) from Rattus norvegicus (Rat).